The sequence spans 177 residues: Small ribosomal subunit protein eS10z (177 aa).

The interval 90–177 is disordered; it reads TLKKSAKPGG…AAAPSGSGFP (88 aa). Residues 108-140 are compositionally biased toward basic and acidic residues; sequence DRQRGPPRSDGDRPRFGDRDGYRGGPRGGDEKG. A compositionally biased stretch (low complexity) spans 141 to 150; sequence GAPADFQPSF. Gly residues predominate over residues 151–165; it reads QGGGGRPGFGRGAGG. Residues 166–177 are compositionally biased toward low complexity; it reads YSAAAPSGSGFP.

It belongs to the eukaryotic ribosomal protein eS10 family.

It localises to the cytoplasm. In Arabidopsis thaliana (Mouse-ear cress), this protein is Small ribosomal subunit protein eS10z (RPS10A).